A 349-amino-acid polypeptide reads, in one-letter code: Core protein VP7 (349 aa).

A glycan (N-linked (GlcNAc...) asparagine; by host) is linked at N287.

This sequence belongs to the orbivirus VP7 family. As to quaternary structure, homotrimer that assemble in a complex of 260 capsomers on an inner scaffold composed of VP3.

It is found in the virion. In terms of biological role, the VP7 protein is one of the five proteins (with VP1, VP3, VP4, and VP6) which form the inner capsid of the virus. In Antilocapra americana (Pronghorn), this protein is Core protein VP7 (Segment-7).